Consider the following 1078-residue polypeptide: Exportin-1 (1078 aa).

Residues 34 to 100 form the Importin N-terminal domain; the sequence is AQQVLTQFQA…RNYIVAVMIK (67 aa).

It belongs to the exportin family. As to quaternary structure, interacts with php4.

Its subcellular location is the nucleus. In terms of biological role, receptor for the leucine-rich nuclear export signal (NES). In Schizosaccharomyces pombe (strain 972 / ATCC 24843) (Fission yeast), this protein is Exportin-1 (xpo1).